The following is a 497-amino-acid chain: Probable malate:quinone oxidoreductase (497 aa).

It belongs to the MQO family. The cofactor is FAD.

It carries out the reaction (S)-malate + a quinone = a quinol + oxaloacetate. The protein operates within carbohydrate metabolism; tricarboxylic acid cycle; oxaloacetate from (S)-malate (quinone route): step 1/1. The sequence is that of Probable malate:quinone oxidoreductase from Rhodopseudomonas palustris (strain TIE-1).